Here is a 401-residue protein sequence, read N- to C-terminus: Tyrosine--tRNA ligase (401 aa).

The 'HIGH' region motif lies at 42–51 (PTAPDLHLGH). A 'KMSKS' region motif is present at residues 226 to 230 (KMSKS). ATP is bound at residue Lys-229. In terms of domain architecture, S4 RNA-binding spans 336–397 (IALAQLLKQI…GKRRIAKLSI (62 aa)).

It belongs to the class-I aminoacyl-tRNA synthetase family. TyrS type 2 subfamily. In terms of assembly, homodimer.

The protein resides in the cytoplasm. It catalyses the reaction tRNA(Tyr) + L-tyrosine + ATP = L-tyrosyl-tRNA(Tyr) + AMP + diphosphate + H(+). In terms of biological role, catalyzes the attachment of tyrosine to tRNA(Tyr) in a two-step reaction: tyrosine is first activated by ATP to form Tyr-AMP and then transferred to the acceptor end of tRNA(Tyr). In Legionella pneumophila (strain Paris), this protein is Tyrosine--tRNA ligase.